Here is a 431-residue protein sequence, read N- to C-terminus: L-lysine N6-monooxygenase MbtG (431 aa).

The first 21 residues, 1–21 (MNPTLAVLGAGAKAVAVAAKA), serve as a signal peptide directing secretion.

This sequence belongs to the lysine N(6)-hydroxylase/L-ornithine N(5)-oxygenase family. FAD is required as a cofactor.

The catalysed reaction is L-lysine + NADPH + O2 = N(6)-hydroxy-L-lysine + NADP(+) + H2O. The protein operates within siderophore biosynthesis; mycobactin biosynthesis. Flavoprotein monooxygenase required for N-hydroxylation of the two acylated lysine residues during mycobactin assembly, thus producing the hydroxamate groups necessary for iron sequestration. Is also able, but less efficiently, to hydroxylate L-lysine (non acylated) in vitro. This chain is L-lysine N6-monooxygenase MbtG (mbtG), found in Mycobacterium bovis (strain ATCC BAA-935 / AF2122/97).